The following is a 311-amino-acid chain: Urease accessory protein UreD (311 aa).

The protein belongs to the UreD family. UreD, UreF and UreG form a complex that acts as a GTP-hydrolysis-dependent molecular chaperone, activating the urease apoprotein by helping to assemble the nickel containing metallocenter of UreC. The UreE protein probably delivers the nickel.

It localises to the cytoplasm. Its function is as follows. Required for maturation of urease via the functional incorporation of the urease nickel metallocenter. This Synechococcus sp. (strain CC9605) protein is Urease accessory protein UreD.